The following is a 276-amino-acid chain: L-aminoadipate-semialdehyde dehydrogenase-phosphopantetheinyl transferase (276 aa).

Belongs to the P-Pant transferase superfamily. AcpS family.

It carries out the reaction apo-[ACP] + CoA = holo-[ACP] + adenosine 3',5'-bisphosphate + H(+). In terms of biological role, catalyzes the transfer of a 4'-phosphopantetheine moiety from coenzyme A to a serine residue of acceptor proteins, such as alpha-aminoadipate reductase. Necessary for alpha-aminoadipate reductase activity. The sequence is that of L-aminoadipate-semialdehyde dehydrogenase-phosphopantetheinyl transferase (LYS5) from Eremothecium gossypii (strain ATCC 10895 / CBS 109.51 / FGSC 9923 / NRRL Y-1056) (Yeast).